Here is a 126-residue protein sequence, read N- to C-terminus: Aspartate 1-decarboxylase (126 aa).

Ser-25 (schiff-base intermediate with substrate; via pyruvic acid) is an active-site residue. Ser-25 carries the post-translational modification Pyruvic acid (Ser). Residue Thr-57 coordinates substrate. Residue Tyr-58 is the Proton donor of the active site. Residue 73–75 participates in substrate binding; the sequence is GAA.

The protein belongs to the PanD family. As to quaternary structure, heterooctamer of four alpha and four beta subunits. It depends on pyruvate as a cofactor. Is synthesized initially as an inactive proenzyme, which is activated by self-cleavage at a specific serine bond to produce a beta-subunit with a hydroxyl group at its C-terminus and an alpha-subunit with a pyruvoyl group at its N-terminus.

It localises to the cytoplasm. It carries out the reaction L-aspartate + H(+) = beta-alanine + CO2. Its pathway is cofactor biosynthesis; (R)-pantothenate biosynthesis; beta-alanine from L-aspartate: step 1/1. Functionally, catalyzes the pyruvoyl-dependent decarboxylation of aspartate to produce beta-alanine. This is Aspartate 1-decarboxylase from Serratia proteamaculans (strain 568).